We begin with the raw amino-acid sequence, 803 residues long: Subtilisin-like protease SBT5.5 (803 aa).

Positions 1-22 (MKRIFGIFIFLSLLLFLVPLLA) are cleaved as a signal peptide. The propeptide at 23 to 112 (SCTKEKQVYI…KSDPRKYKIH (90 aa)) is activation peptide. An Inhibitor I9 domain is found at 30-108 (VYIVYFGEHK…VSVFKSDPRK (79 aa)). A Peptidase S8 domain is found at 140–656 (KYDVNDRFRV…SRHFRPTKAA (517 aa)). Aspartate 169 (charge relay system) is an active-site residue. An N-linked (GlcNAc...) asparagine glycan is attached at asparagine 202. The active-site Charge relay system is the histidine 244. Residues 409–504 (YAPLVYAPDV…VFSSTVDRIL (96 aa)) form the PA domain. The active-site Charge relay system is serine 589. Asparagine 725 carries an N-linked (GlcNAc...) asparagine glycan.

Belongs to the peptidase S8 family.

It is found in the secreted. The polypeptide is Subtilisin-like protease SBT5.5 (Arabidopsis thaliana (Mouse-ear cress)).